Consider the following 338-residue polypeptide: Outer membrane transporter protein TsaT (338 aa).

An N-terminal signal peptide occupies residues 1–22; sequence MNFRRRLCTAALIAALPLASQA.

Part of a two-component transport system composed of TsaT and TsaS.

The protein localises to the cell outer membrane. In terms of biological role, involved in the uptake of p-toluenesulphonate (TSA). Forms a large, general diffusion pore with a preference for anions. The protein is Outer membrane transporter protein TsaT (tsaT) of Comamonas testosteroni (Pseudomonas testosteroni).